The primary structure comprises 113 residues: Large ribosomal subunit protein uL22 (113 aa).

This sequence belongs to the universal ribosomal protein uL22 family. In terms of assembly, part of the 50S ribosomal subunit.

In terms of biological role, this protein binds specifically to 23S rRNA; its binding is stimulated by other ribosomal proteins, e.g. L4, L17, and L20. It is important during the early stages of 50S assembly. It makes multiple contacts with different domains of the 23S rRNA in the assembled 50S subunit and ribosome. The globular domain of the protein is located near the polypeptide exit tunnel on the outside of the subunit, while an extended beta-hairpin is found that lines the wall of the exit tunnel in the center of the 70S ribosome. The chain is Large ribosomal subunit protein uL22 from Chloroflexus aggregans (strain MD-66 / DSM 9485).